The sequence spans 143 residues: Large ribosomal subunit protein uL13c (143 aa).

It belongs to the universal ribosomal protein uL13 family. In terms of assembly, part of the 50S ribosomal subunit.

It localises to the plastid. The protein resides in the chloroplast. The polypeptide is Large ribosomal subunit protein uL13c (Guillardia theta (Cryptophyte)).